Here is a 500-residue protein sequence, read N- to C-terminus: MSWAVVFGLLAALLLLLLLTRRRTRRPGEPPLDLGSIPWLGHALEFGKDAAGFLTRMKEKHGDIFTVLVGGRHVTVLLDPHSYDAVVWEPRSRLDFHAYAVFLMERIFDVQLPHYNPGDEKSKMKPTLLHKELQALTDAMYTNLRTVLLGDTVEAGSGWHEMGLLEFSYGFLLRAGYLTQYGVEAPPHTQESQAQDRVHSADVFHTFRQLDLLLPKLARGSLSAGDKDRVGKVKGRLWKLLSPTRLASRAHRSRWLESYLLHLEEMGVSEEMQARALVLQLWATQGNMGPAAFWLLLFLLKNPEALAAVRGELETVLLGAEQPISQMTTLPQKVLDSMPVLDSVLSESLRLTAAPFITREVVADLALPMADGREFSLRRGDRLLLFPFLSPQKDPEIYTDPEVFKYNRFLNPDGSEKKDFYKDGKRLKNYSLPWGAGHNQCLGKGYAVNSIKQFVFLVLTQFDLELITPDVDIPEFDLSRYGFGLMQPEHDVPVRYRIRP.

A helical transmembrane segment spans residues Met-1–Thr-20. Residues Arg-106, Leu-112, Asn-287, Thr-358 to Arg-359, and Arg-382 contribute to the substrate site. Cys-441 is a heme binding site.

The protein belongs to the cytochrome P450 family. It depends on heme as a cofactor.

It is found in the endoplasmic reticulum membrane. It catalyses the reaction prostaglandin H2 = prostaglandin I2. It carries out the reaction a hydroperoxyeicosatetraenoate = an oxoeicosatetraenoate + H2O. The catalysed reaction is (15S)-hydroperoxy-(5Z,8Z,11Z,13E)-eicosatetraenoate = 15-oxo-(5Z,8Z,11Z,13E)-eicosatetraenoate + H2O. The enzyme catalyses (15S)-hydroperoxy-(5Z,8Z,11Z,13E)-eicosatetraenoate + AH2 = (15S)-hydroxy-(5Z,8Z,11Z,13E)-eicosatetraenoate + A + H2O. Catalyzes the biosynthesis and metabolism of eicosanoids. Catalyzes the isomerization of prostaglandin H2 to prostacyclin (= prostaglandin I2), a potent mediator of vasodilation and inhibitor of platelet aggregation. Additionally, displays dehydratase activity, toward hydroperoxyeicosatetraenoates (HPETEs), especially toward (15S)-hydroperoxy-(5Z,8Z,11Z,13E)-eicosatetraenoate (15(S)-HPETE). The chain is Prostacyclin synthase (PTGIS) from Bos taurus (Bovine).